Consider the following 215-residue polypeptide: Nascent polypeptide-associated complex subunit alpha (215 aa).

Residues 1–81 (MPGEATDTVP…SEKKARKAMS (81 aa)) are disordered. Polar residues predominate over residues 9 to 28 (VPATEQELPQPQAETGSGTE). Acidic residues predominate over residues 29 to 42 (SDSDESVPELEEQD). Position 43 is a phosphoserine; by ILK1 (S43). Over residues 44–57 (TQATTQQAQLAAAA) the composition is skewed to low complexity. The interval 69–80 (QSRSEKKARKAM) is required for DNA-binding. The 66-residue stretch at 70-135 (SRSEKKARKA…AKIEDLSQQA (66 aa)) folds into the NAC-A/B domain. The segment at 93 to 108 (RVTIRKSKNILFVITK) is RNA/DNA-binding. A Phosphoserine modification is found at S132. K142 carries the N6-acetyllysine; alternate modification. Residue K142 forms a Glycyl lysine isopeptide (Lys-Gly) (interchain with G-Cter in SUMO2); alternate linkage. T159 is subject to Phosphothreonine; by GSK3-beta. Phosphothreonine is present on T161. Phosphoserine is present on residues S166, S186, S191, and S203. The UBA domain occupies 176–213 (VEVKDIELVMSQANVSRAKAVRALKNNSNDIVNAIMEL).

It belongs to the NAC-alpha family. Part of the nascent polypeptide-associated complex (NAC), which is a heterodimer of NACA and BTF3 (via NAC-A/B domains). NAC associates with ribosomes through the BTF3/NACB subunit and contacts the ribosomal protein L23, which is positioned near the exiting site. Both subunits can contact nascent polypeptide chains. NACA may also form homodimers, and only this form binds DNA. Interacts with TBP and JUN. Phosphorylation of Ser-43 by ILK during cell adhesion may promote nuclear localization. Phosphorylation of Thr-159 by GSK3B may promote proteasome mediated degradation.

Its subcellular location is the cytoplasm. It is found in the nucleus. Prevents inappropriate targeting of non-secretory polypeptides to the endoplasmic reticulum (ER). Binds to nascent polypeptide chains as they emerge from the ribosome and blocks their interaction with the signal recognition particle (SRP), which normally targets nascent secretory peptides to the ER. Also reduces the inherent affinity of ribosomes for protein translocation sites in the ER membrane (M sites). May act as a specific coactivator for JUN, binding to DNA and stabilizing the interaction of JUN homodimers with target gene promoters. This chain is Nascent polypeptide-associated complex subunit alpha (NACA), found in Bos taurus (Bovine).